The chain runs to 122 residues: ATP synthase epsilon chain (122 aa).

Belongs to the ATPase epsilon chain family. In terms of assembly, F-type ATPases have 2 components, CF(1) - the catalytic core - and CF(0) - the membrane proton channel. CF(1) has five subunits: alpha(3), beta(3), gamma(1), delta(1), epsilon(1). CF(0) has three main subunits: a, b and c.

The protein localises to the cell membrane. Produces ATP from ADP in the presence of a proton gradient across the membrane. The chain is ATP synthase epsilon chain from Rhodococcus jostii (strain RHA1).